The primary structure comprises 161 residues: 3-isopropylmalate dehydratase small subunit (161 aa).

This sequence belongs to the LeuD family. LeuD type 2 subfamily. Heterodimer of LeuC and LeuD.

The enzyme catalyses (2R,3S)-3-isopropylmalate = (2S)-2-isopropylmalate. It functions in the pathway amino-acid biosynthesis; L-leucine biosynthesis; L-leucine from 3-methyl-2-oxobutanoate: step 2/4. In terms of biological role, catalyzes the isomerization between 2-isopropylmalate and 3-isopropylmalate, via the formation of 2-isopropylmaleate. This Pyrobaculum calidifontis (strain DSM 21063 / JCM 11548 / VA1) protein is 3-isopropylmalate dehydratase small subunit.